The primary structure comprises 207 residues: Ribosomal RNA small subunit methyltransferase G (207 aa).

S-adenosyl-L-methionine is bound by residues G74, F79, 124 to 125 (VE), and R138.

The protein belongs to the methyltransferase superfamily. RNA methyltransferase RsmG family.

The protein localises to the cytoplasm. It catalyses the reaction guanosine(527) in 16S rRNA + S-adenosyl-L-methionine = N(7)-methylguanosine(527) in 16S rRNA + S-adenosyl-L-homocysteine. Specifically methylates the N7 position of guanine in position 527 of 16S rRNA. This chain is Ribosomal RNA small subunit methyltransferase G, found in Hyphomonas neptunium (strain ATCC 15444).